Consider the following 102-residue polypeptide: Protein RnfH (102 aa).

This sequence belongs to the UPF0125 (RnfH) family.

The chain is Protein RnfH from Haemophilus influenzae (strain 86-028NP).